We begin with the raw amino-acid sequence, 308 residues long: Protein translocase subunit SecF (308 aa).

Helical transmembrane passes span 22–42, 140–160, 164–184, 194–214, 246–266, and 272–292; these read AVSYSFSIILSLISFIWIGIY, IEAGAMAMLSSFLAIMVYIWV, WYFGLGILIALVHDVILALGF, LSTIAAVLTIIGYSVNDSVVI, ILTVITTLLANLALMLFGGEA, and VLVFFGIIAGTYSSIFISAPI.

Belongs to the SecD/SecF family. SecF subfamily. As to quaternary structure, forms a complex with SecD. Part of the essential Sec protein translocation apparatus which comprises SecA, SecYEG and auxiliary proteins SecDF-YajC and YidC.

It is found in the cell inner membrane. In terms of biological role, part of the Sec protein translocase complex. Interacts with the SecYEG preprotein conducting channel. SecDF uses the proton motive force (PMF) to complete protein translocation after the ATP-dependent function of SecA. The sequence is that of Protein translocase subunit SecF from Rickettsia akari (strain Hartford).